A 349-amino-acid chain; its full sequence is tRNA pseudouridine synthase D (349 aa).

F26 is a binding site for substrate. D79 serves as the catalytic Nucleophile. A substrate-binding site is contributed by N128. In terms of domain architecture, TRUD spans 154 to 302 (GVPNYFGSQR…VEGSRRAVLL (149 aa)). Substrate is bound at residue F328.

It belongs to the pseudouridine synthase TruD family.

The enzyme catalyses uridine(13) in tRNA = pseudouridine(13) in tRNA. Its function is as follows. Responsible for synthesis of pseudouridine from uracil-13 in transfer RNAs. This is tRNA pseudouridine synthase D from Yersinia pseudotuberculosis serotype IB (strain PB1/+).